Reading from the N-terminus, the 227-residue chain is Uridylate kinase (227 aa).

An ATP-binding site is contributed by K6 to K10. G43 serves as a coordination point for UMP. ATP-binding residues include G44 and R48. UMP-binding positions include D65 and F113–T119. ATP-binding residues include T139, N140, Y145, and D148.

Belongs to the UMP kinase family. Homohexamer.

It is found in the cytoplasm. The catalysed reaction is UMP + ATP = UDP + ADP. The protein operates within pyrimidine metabolism; CTP biosynthesis via de novo pathway; UDP from UMP (UMPK route): step 1/1. Its activity is regulated as follows. Inhibited by UTP. Its function is as follows. Catalyzes the reversible phosphorylation of UMP to UDP. The sequence is that of Uridylate kinase from Sulfolobus acidocaldarius (strain ATCC 33909 / DSM 639 / JCM 8929 / NBRC 15157 / NCIMB 11770).